We begin with the raw amino-acid sequence, 745 residues long: Exocyst complex component 3 (745 aa).

Position 28 is an N6-acetyllysine (Lys-28).

The protein belongs to the SEC6 family. The exocyst complex is composed of EXOC1, EXOC2, EXOC3, EXOC4, EXOC5, EXOC6, EXOC7 and EXOC8. Interacts with EXOC3L1. Interacts with BIRC6/bruce. Interacts with MYRIP. Interacts with SLC6A9. In terms of tissue distribution, expressed in epididymis (at protein level).

It is found in the cytoplasm. Its subcellular location is the perinuclear region. It localises to the cell projection. The protein localises to the growth cone. The protein resides in the midbody. It is found in the golgi apparatus. Its subcellular location is the neuron projection. In terms of biological role, component of the exocyst complex involved in the docking of exocytic vesicles with fusion sites on the plasma membrane. In Homo sapiens (Human), this protein is Exocyst complex component 3 (EXOC3).